The following is a 572-amino-acid chain: Proline--tRNA ligase (572 aa).

The protein belongs to the class-II aminoacyl-tRNA synthetase family. ProS type 1 subfamily. Homodimer.

Its subcellular location is the cytoplasm. The enzyme catalyses tRNA(Pro) + L-proline + ATP = L-prolyl-tRNA(Pro) + AMP + diphosphate. In terms of biological role, catalyzes the attachment of proline to tRNA(Pro) in a two-step reaction: proline is first activated by ATP to form Pro-AMP and then transferred to the acceptor end of tRNA(Pro). As ProRS can inadvertently accommodate and process non-cognate amino acids such as alanine and cysteine, to avoid such errors it has two additional distinct editing activities against alanine. One activity is designated as 'pretransfer' editing and involves the tRNA(Pro)-independent hydrolysis of activated Ala-AMP. The other activity is designated 'posttransfer' editing and involves deacylation of mischarged Ala-tRNA(Pro). The misacylated Cys-tRNA(Pro) is not edited by ProRS. The protein is Proline--tRNA ligase of Pectobacterium atrosepticum (strain SCRI 1043 / ATCC BAA-672) (Erwinia carotovora subsp. atroseptica).